Consider the following 359-residue polypeptide: 4-hydroxy-3-methylbut-2-en-1-yl diphosphate synthase (flavodoxin) (359 aa).

Residues Cys264, Cys267, Cys299, and Glu306 each contribute to the [4Fe-4S] cluster site.

This sequence belongs to the IspG family. Requires [4Fe-4S] cluster as cofactor.

It catalyses the reaction (2E)-4-hydroxy-3-methylbut-2-enyl diphosphate + oxidized [flavodoxin] + H2O + 2 H(+) = 2-C-methyl-D-erythritol 2,4-cyclic diphosphate + reduced [flavodoxin]. Its pathway is isoprenoid biosynthesis; isopentenyl diphosphate biosynthesis via DXP pathway; isopentenyl diphosphate from 1-deoxy-D-xylulose 5-phosphate: step 5/6. In terms of biological role, converts 2C-methyl-D-erythritol 2,4-cyclodiphosphate (ME-2,4cPP) into 1-hydroxy-2-methyl-2-(E)-butenyl 4-diphosphate. In Helicobacter pylori (strain P12), this protein is 4-hydroxy-3-methylbut-2-en-1-yl diphosphate synthase (flavodoxin).